The following is a 106-amino-acid chain: Large ribosomal subunit protein eL42 (106 aa).

The protein belongs to the eukaryotic ribosomal protein eL42 family.

In Kluyveromyces lactis (strain ATCC 8585 / CBS 2359 / DSM 70799 / NBRC 1267 / NRRL Y-1140 / WM37) (Yeast), this protein is Large ribosomal subunit protein eL42 (RPL44).